A 122-amino-acid polypeptide reads, in one-letter code: Large ribosomal subunit protein uL14 (122 aa).

The protein belongs to the universal ribosomal protein uL14 family. Part of the 50S ribosomal subunit. Forms a cluster with proteins L3 and L19. In the 70S ribosome, L14 and L19 interact and together make contacts with the 16S rRNA in bridges B5 and B8.

Its function is as follows. Binds to 23S rRNA. Forms part of two intersubunit bridges in the 70S ribosome. The polypeptide is Large ribosomal subunit protein uL14 (Syntrophomonas wolfei subsp. wolfei (strain DSM 2245B / Goettingen)).